The chain runs to 404 residues: MKRTVIMMLDSFGVGAAGDAAKFGDLGSDTFGHIAKACAEGEADIGREGPLTLPNLARLGLAHAAMESTGAFAPGFADNVELIGAYGHAQELSSGKDTPSGHWEMAGVPVLFEWGYFSEHQNSFPKELTDKILARAGLDGFLGNCHASGTTILEELGEEHMRSGKPIFYTSADSVFQIACHEGTFGLENLYRLCEIAREELEPYNIGRVIARPFDGTGPSDFARTGNRKDYSLEPPAKTVLDKLKAAGGEVVSVGKIADIYAYCGITKKVKANGLEALFDATLAEVKSAGENTIVFTNFVDFDSHYGHRRDVAGYAKGLEYFDSRLPEMLALLDEDDLLILTADHGCDPTWQGTDHTREYVPVLAYGAGLKAGSLGRRNSFADIGQSIASYFKLEPMEYGESFI.

Residues Asp-10, Asp-303, His-308, Asp-344, His-345, and His-356 each contribute to the Mn(2+) site.

The protein belongs to the phosphopentomutase family. The cofactor is Mn(2+).

Its subcellular location is the cytoplasm. It catalyses the reaction 2-deoxy-alpha-D-ribose 1-phosphate = 2-deoxy-D-ribose 5-phosphate. The enzyme catalyses alpha-D-ribose 1-phosphate = D-ribose 5-phosphate. Its pathway is carbohydrate degradation; 2-deoxy-D-ribose 1-phosphate degradation; D-glyceraldehyde 3-phosphate and acetaldehyde from 2-deoxy-alpha-D-ribose 1-phosphate: step 1/2. Isomerase that catalyzes the conversion of deoxy-ribose 1-phosphate (dRib-1-P) and ribose 1-phosphate (Rib-1-P) to deoxy-ribose 5-phosphate (dRib-5-P) and ribose 5-phosphate (Rib-5-P), respectively. The sequence is that of Phosphopentomutase from Shewanella sp. (strain ANA-3).